The primary structure comprises 359 residues: Sulfate/thiosulfate import ATP-binding protein CysA (359 aa).

Positions 3–237 (VRVAGVRKEF…PNSPFVYGFI (235 aa)) constitute an ABC transporter domain. 35-42 (GPSGSGKT) contributes to the ATP binding site.

The protein belongs to the ABC transporter superfamily. Sulfate/tungstate importer (TC 3.A.1.6) family. The complex is composed of two ATP-binding proteins (CysA), two transmembrane proteins (CysT and CysW) and a solute-binding protein (CysP).

It localises to the cell inner membrane. The catalysed reaction is sulfate(out) + ATP + H2O = sulfate(in) + ADP + phosphate + H(+). It carries out the reaction thiosulfate(out) + ATP + H2O = thiosulfate(in) + ADP + phosphate + H(+). Functionally, part of the ABC transporter complex CysAWTP involved in sulfate/thiosulfate import. Responsible for energy coupling to the transport system. The polypeptide is Sulfate/thiosulfate import ATP-binding protein CysA (Brucella melitensis biotype 1 (strain ATCC 23456 / CCUG 17765 / NCTC 10094 / 16M)).